Here is a 229-residue protein sequence, read N- to C-terminus: Cytochrome c oxidase subunit 2 (229 aa).

The Mitochondrial intermembrane segment spans residues 1–26 (MATWAQFGLQDASSPLMEELTYFHDY). A helical transmembrane segment spans residues 27–48 (ALIVLTLITILVFYGLVSLLLS). The Mitochondrial matrix segment spans residues 49-62 (SSTNRFFLEGQELE). Residues 63–82 (TIWTVVPAFILIFIALPSLQ) traverse the membrane as a helical segment. The Mitochondrial intermembrane portion of the chain corresponds to 83–229 (LLYLMDEVNN…ENWVAQYIEE (147 aa)). Histidine 161, cysteine 196, glutamate 198, cysteine 200, histidine 204, and methionine 207 together coordinate Cu cation. Glutamate 198 is a binding site for Mg(2+).

It belongs to the cytochrome c oxidase subunit 2 family. Component of the cytochrome c oxidase (complex IV, CIV), a multisubunit enzyme composed of a catalytic core of 3 subunits and several supernumerary subunits. The complex exists as a monomer or a dimer and forms supercomplexes (SCs) in the inner mitochondrial membrane with ubiquinol-cytochrome c oxidoreductase (cytochrome b-c1 complex, complex III, CIII). It depends on Cu cation as a cofactor.

It is found in the mitochondrion inner membrane. The catalysed reaction is 4 Fe(II)-[cytochrome c] + O2 + 8 H(+)(in) = 4 Fe(III)-[cytochrome c] + 2 H2O + 4 H(+)(out). Functionally, component of the cytochrome c oxidase, the last enzyme in the mitochondrial electron transport chain which drives oxidative phosphorylation. The respiratory chain contains 3 multisubunit complexes succinate dehydrogenase (complex II, CII), ubiquinol-cytochrome c oxidoreductase (cytochrome b-c1 complex, complex III, CIII) and cytochrome c oxidase (complex IV, CIV), that cooperate to transfer electrons derived from NADH and succinate to molecular oxygen, creating an electrochemical gradient over the inner membrane that drives transmembrane transport and the ATP synthase. Cytochrome c oxidase is the component of the respiratory chain that catalyzes the reduction of oxygen to water. Electrons originating from reduced cytochrome c in the intermembrane space (IMS) are transferred via the dinuclear copper A center (CU(A)) of subunit 2 and heme A of subunit 1 to the active site in subunit 1, a binuclear center (BNC) formed by heme A3 and copper B (CU(B)). The BNC reduces molecular oxygen to 2 water molecules using 4 electrons from cytochrome c in the IMS and 4 protons from the mitochondrial matrix. This Paracentrotus lividus (Common sea urchin) protein is Cytochrome c oxidase subunit 2 (COII).